A 1028-amino-acid polypeptide reads, in one-letter code: Contactin-3 (1028 aa).

A signal peptide spans 1–19; the sequence is MMLSWKQLILLSFIGCLAG. Ig-like C2-type domains lie at 26–117, 122–208, 227–313, 318–402, 408–497, and 499–593; these read PVFV…AKLQ, ENFK…ARVL, PKIE…GRLT, PYWV…AELK, PDFS…LVVT, and PTRI…AELI. Cystine bridges form between Cys-50-Cys-100, Cys-144-Cys-196, Cys-249-Cys-297, Cys-339-Cys-386, and Cys-431-Cys-479. 2 N-linked (GlcNAc...) asparagine glycosylation sites follow: Asn-65 and Asn-193. N-linked (GlcNAc...) asparagine glycosylation is found at Asn-377, Asn-468, Asn-489, and Asn-538. The cysteines at positions 521 and 577 are disulfide-linked. Fibronectin type-III domains lie at 600–698, 703–800, 805–901, and 902–998; these read PPEN…TEEA, APSE…SAEE, APSH…TKKT, and PPSQ…TSMD. The disordered stretch occupies residues 684 to 714; that stretch reads GEPSLPSEKVRTEEAAPEVAPSEVSGGGGSR. Asn-765, Asn-860, Asn-895, Asn-913, Asn-931, and Asn-956 each carry an N-linked (GlcNAc...) asparagine glycan. A lipid anchor (GPI-anchor amidated serine) is attached at Ser-1002. A propeptide spans 1003 to 1028 (removed in mature form); it reads TSAISDIHPVSGYISVLLFFIVNALW.

The protein belongs to the immunoglobulin superfamily. Contactin family. Interacts with PTPRG. In terms of tissue distribution, specifically expressed in brain. Not expressed in peripheral tissues such as heart, lung, liver, spleen, kidney and skeletal muscle. In brain, it is restricted to subsets of neurons such as Purkinje cells of the cerebellum, granule cells of the dentate gyrus, and neurons in the superficial layers of the cerebral cortex.

The protein localises to the cell membrane. Contactins mediate cell surface interactions during nervous system development. Has some neurite outgrowth-promoting activity. This is Contactin-3 (Cntn3) from Rattus norvegicus (Rat).